A 305-amino-acid chain; its full sequence is tRNA dimethylallyltransferase (305 aa).

14–21 (GPTASGKT) is an ATP binding site. Residue 16 to 21 (TASGKT) coordinates substrate. Interaction with substrate tRNA stretches follow at residues 39-42 (DSAL), 163-167 (QRIIR), and 243-248 (RCVGYR).

The protein belongs to the IPP transferase family. In terms of assembly, monomer. Mg(2+) is required as a cofactor.

It carries out the reaction adenosine(37) in tRNA + dimethylallyl diphosphate = N(6)-dimethylallyladenosine(37) in tRNA + diphosphate. In terms of biological role, catalyzes the transfer of a dimethylallyl group onto the adenine at position 37 in tRNAs that read codons beginning with uridine, leading to the formation of N6-(dimethylallyl)adenosine (i(6)A). In Vesicomyosocius okutanii subsp. Calyptogena okutanii (strain HA), this protein is tRNA dimethylallyltransferase.